The sequence spans 243 residues: Ubiquinone/menaquinone biosynthesis C-methyltransferase UbiE (243 aa).

Residues Thr69, Asp90, and 116–117 (DA) each bind S-adenosyl-L-methionine.

This sequence belongs to the class I-like SAM-binding methyltransferase superfamily. MenG/UbiE family.

The enzyme catalyses a 2-demethylmenaquinol + S-adenosyl-L-methionine = a menaquinol + S-adenosyl-L-homocysteine + H(+). It carries out the reaction a 2-methoxy-6-(all-trans-polyprenyl)benzene-1,4-diol + S-adenosyl-L-methionine = a 5-methoxy-2-methyl-3-(all-trans-polyprenyl)benzene-1,4-diol + S-adenosyl-L-homocysteine + H(+). Its pathway is quinol/quinone metabolism; menaquinone biosynthesis; menaquinol from 1,4-dihydroxy-2-naphthoate: step 2/2. The protein operates within cofactor biosynthesis; ubiquinone biosynthesis. Functionally, methyltransferase required for the conversion of demethylmenaquinol (DMKH2) to menaquinol (MKH2) and the conversion of 2-polyprenyl-6-methoxy-1,4-benzoquinol (DDMQH2) to 2-polyprenyl-3-methyl-6-methoxy-1,4-benzoquinol (DMQH2). This Paraburkholderia phytofirmans (strain DSM 17436 / LMG 22146 / PsJN) (Burkholderia phytofirmans) protein is Ubiquinone/menaquinone biosynthesis C-methyltransferase UbiE.